We begin with the raw amino-acid sequence, 268 residues long: Putative sgc region protein SgcQ (268 aa).

Belongs to the BtpA family.

This Escherichia coli (strain K12) protein is Putative sgc region protein SgcQ (sgcQ).